Here is a 247-residue protein sequence, read N- to C-terminus: ATP synthase subunit a, chloroplastic (247 aa).

5 helical membrane-spanning segments follow: residues 38–58 (QVLI…TVAV), 95–115 (VPFI…GALL), 134–154 (INTT…AGLT), 199–219 (LVVV…VMFL), and 220–240 (GLFT…AYIG).

This sequence belongs to the ATPase A chain family. As to quaternary structure, F-type ATPases have 2 components, CF(1) - the catalytic core - and CF(0) - the membrane proton channel. CF(1) has five subunits: alpha(3), beta(3), gamma(1), delta(1), epsilon(1). CF(0) has four main subunits: a, b, b' and c.

It is found in the plastid. It localises to the chloroplast thylakoid membrane. Key component of the proton channel; it plays a direct role in the translocation of protons across the membrane. The chain is ATP synthase subunit a, chloroplastic from Platanus occidentalis (Sycamore).